We begin with the raw amino-acid sequence, 911 residues long: MFAPLLKKLFGSKNEREVKRMLKAVQSVNALEEQMIALSDEQLRGKTEEFKARLAKGETLDQLLAEAFAVAREAGKRVMGMRHFDVQLIGGMTLHEGKIAEMRTGEGKTLVGTLAVYLNALSGKGVHVVTVNEYLARRDANWMRPLYEFLGLTVGIVTPFQPPEEKRAAYAADITYGTNNEFGFDYLRDNMAFSLEDKFQRELNFAVIDEVDSILIDEARTPLIISGQAEDSSKLYTEINRLIPRLKQHIEEEEGVVTQEGHYKVDEKSRQVELNEAGHQYVEEMLTAAGLLAEGESLYSAHNLGLLTHVYAGLRAHTLFNRNVEYIVQNGQVILIDEHTGRTMPGRRLSEGLHQAIEAKEGVNIQAESQTLASTTFQNYFRLYNKLSGMTGTADTEAFEFRQIYGLDVVVIPTNKPIARKDFNDLVYLTQEEKYQAIITDIKDCQAQGRPILVGTASIETSEYVSQLLQKEKIEHKVLNAKYHDKEAEIIAQAGRPGAVTIATNMAGRGTDILLGGNWEVEVAALENPTDEQIAQIKTEWQKRHQQVIEAGGLHVIASERHESRRIDNQLRGRAGRQGDPGSSRFYLSLEDNLMRIFASDRVKNFMKALGMQSGEAIEHRMVTNAIEKAQRKVEGRNFDMRKQLLEFDDVANEQRKVIYHMRNSLLAAENVGDTIAEFREEVLTAAINGHIPPQSMPEQWDVAGLESTLQSDFGLKLPIQQWLDEDDKLYEETLRERILAELVAAYNEKETQASAEALRTFEKQILLRVLDDLWKDHLSTMDHLRHGIHLRGYAQKNPKQEYKRESFALFQELLESIKRDTIRVLSHVQVRREDPAEEEARLRREAEALAERMQFQHAEASALAAEQDGAEEGAVATATAPVRSENKVGRNEPCPCGSGKKYKHCHGQIN.

ATP-binding positions include Gln-87, 105–109 (GEGKT), and Asp-512. A disordered region spans residues 865 to 892 (AAEQDGAEEGAVATATAPVRSENKVGRN). Positions 873 to 883 (EGAVATATAPV) are enriched in low complexity. Cys-895, Cys-897, Cys-906, and His-907 together coordinate Zn(2+).

This sequence belongs to the SecA family. Monomer and homodimer. Part of the essential Sec protein translocation apparatus which comprises SecA, SecYEG and auxiliary proteins SecDF-YajC and YidC. The cofactor is Zn(2+).

The protein localises to the cell inner membrane. The protein resides in the cytoplasm. The catalysed reaction is ATP + H2O + cellular proteinSide 1 = ADP + phosphate + cellular proteinSide 2.. Its function is as follows. Part of the Sec protein translocase complex. Interacts with the SecYEG preprotein conducting channel. Has a central role in coupling the hydrolysis of ATP to the transfer of proteins into and across the cell membrane, serving both as a receptor for the preprotein-SecB complex and as an ATP-driven molecular motor driving the stepwise translocation of polypeptide chains across the membrane. The protein is Protein translocase subunit SecA of Ectopseudomonas mendocina (strain ymp) (Pseudomonas mendocina).